Consider the following 444-residue polypeptide: Acyl-CoA (8-3)-desaturase (444 aa).

The residue at position 1 (Met-1) is an N-acetylmethionine. Topologically, residues 1–121 (MAPDPVAAKT…FRELRATVEQ (121 aa)) are cytoplasmic. The region spanning 17–94 (PRYFTWDEVA…MNSLLIGELS (78 aa)) is the Cytochrome b5 heme-binding domain. The helical transmembrane segment at 122–142 (MGLMKANHVFFLLYLLHILLL) threads the bilayer. At 143 to 146 (DGAA) the chain is on the lumenal side. A helical transmembrane segment spans residues 147–167 (WLTLWIFGTSFLPFLLCAVLL). Over 168 to 267 (TAAQIQAGWL…PYNHQHKYFF (100 aa)) the chain is Cytoplasmic. Residues 179 to 183 (HDLGH) carry the Histidine box-1 motif. A Histidine box-2 motif is present at residues 216-220 (HFQHH). A helical membrane pass occupies residues 268–288 (LIGPPALVPFFFQWYVFYFVI). Over 289 to 305 (QRKKWVDLAWMITFYIR) the chain is Lumenal. A helical transmembrane segment spans residues 306 to 326 (LLLTYVPLLGLKAFLGLYFIV). Over 327-444 (RFLESNWFVW…QLWLDAYLHQ (118 aa)) the chain is Cytoplasmic. The Histidine box-3 signature appears at 382 to 386 (QIEHH).

It belongs to the fatty acid desaturase type 1 family. Widely expressed. Expressed in brain, liver and thymus (at protein level). Isoform 1 seems to be more abundant than isoform 2. Expression of isoform 2 is very low in spleen and not detectable in skeletal muscle.

The protein localises to the endoplasmic reticulum membrane. Its subcellular location is the mitochondrion. It catalyses the reaction (8Z,11Z,14Z)-eicosatrienoyl-CoA + 2 Fe(II)-[cytochrome b5] + O2 + 2 H(+) = (5Z,8Z,11Z,14Z)-eicosatetraenoyl-CoA + 2 Fe(III)-[cytochrome b5] + 2 H2O. It carries out the reaction (8Z,11Z,14Z,17Z)-eicosatetraenoyl-CoA + 2 Fe(II)-[cytochrome b5] + O2 + 2 H(+) = (5Z,8Z,11Z,14Z,17Z)-eicosapentaenoyl-CoA + 2 Fe(III)-[cytochrome b5] + 2 H2O. The catalysed reaction is (11E)-octadecenoyl-CoA + 2 Fe(II)-[cytochrome b5] + O2 + 2 H(+) = (5Z,11E)-octadecadienoyl-CoA + 2 Fe(III)-[cytochrome b5] + 2 H2O. It participates in lipid metabolism; polyunsaturated fatty acid biosynthesis. Acts as a front-end fatty acyl-coenzyme A (CoA) desaturase that introduces a cis double bond at carbon 5 located between a preexisting double bond and the carboxyl end of the fatty acyl chain. Involved in biosynthesis of highly unsaturated fatty acids (HUFA) from the essential polyunsaturated fatty acids (PUFA) linoleic acid (LA) (18:2n-6) and alpha-linolenic acid (ALA) (18:3n-3) precursors. Specifically, desaturates dihomo-gamma-linoleoate (DGLA) (20:3n-6) and eicosatetraenoate (ETA) (20:4n-3) to generate arachidonate (AA) (20:4n-6) and eicosapentaenoate (EPA) (20:5n-3), respectively. As a rate limiting enzyme for DGLA (20:3n-6) and AA (20:4n-6)-derived eicosanoid biosynthesis, controls the metabolism of inflammatory lipids like prostaglandin E2, critical for efficient acute inflammatory response and maintenance of epithelium homeostasis. Contributes to membrane phospholipid biosynthesis by providing AA (20:4n-6) as a major acyl chain esterified into phospholipids. In particular, regulates phosphatidylinositol-4,5-bisphosphate levels, modulating inflammatory cytokine production in T-cells. Also desaturates (11E)-octadecenoate (trans-vaccenoate)(18:1n-9), a metabolite in the biohydrogenation pathway of LA (18:2n-6). In terms of biological role, does not exhibit any catalytic activity toward 20:3n-6, but it may enhance FADS2 activity. This chain is Acyl-CoA (8-3)-desaturase, found in Papio anubis (Olive baboon).